The chain runs to 479 residues: Pyruvate kinase (479 aa).

Arg-36 contacts substrate. K(+) contacts are provided by Asn-38, Ser-40, and Asp-70. 38–41 (NFSH) contributes to the ATP binding site. 2 residues coordinate ATP: Arg-77 and Lys-160. Residue Glu-225 coordinates Mg(2+). Substrate-binding residues include Gly-251, Asp-252, and Thr-284. Asp-252 contacts Mg(2+).

The protein belongs to the pyruvate kinase family. As to quaternary structure, homotetramer. Requires Mg(2+) as cofactor. It depends on K(+) as a cofactor.

It carries out the reaction pyruvate + ATP = phosphoenolpyruvate + ADP + H(+). It functions in the pathway carbohydrate degradation; glycolysis; pyruvate from D-glyceraldehyde 3-phosphate: step 5/5. Allosterically activated by AMP and by several sugar phosphates. Belongs to type II PK. In Buchnera aphidicola subsp. Baizongia pistaciae (strain Bp), this protein is Pyruvate kinase (pykA).